The chain runs to 317 residues: ATP synthase gamma chain (317 aa).

The protein belongs to the ATPase gamma chain family. In terms of assembly, F-type ATPases have 2 components, CF(1) - the catalytic core - and CF(0) - the membrane proton channel. CF(1) has five subunits: alpha(3), beta(3), gamma(1), delta(1), epsilon(1). CF(0) has three main subunits: a, b and c.

The protein localises to the cellular thylakoid membrane. Functionally, produces ATP from ADP in the presence of a proton gradient across the membrane. The gamma chain is believed to be important in regulating ATPase activity and the flow of protons through the CF(0) complex. This chain is ATP synthase gamma chain, found in Synechococcus sp. (strain CC9311).